Consider the following 164-residue polypeptide: FMN reductase (NADH) RutF (164 aa).

The protein belongs to the non-flavoprotein flavin reductase family. RutF subfamily.

The catalysed reaction is FMNH2 + NAD(+) = FMN + NADH + 2 H(+). Functionally, catalyzes the reduction of FMN to FMNH2 which is used to reduce pyrimidine by RutA via the Rut pathway. The sequence is that of FMN reductase (NADH) RutF from Escherichia coli O127:H6 (strain E2348/69 / EPEC).